The chain runs to 609 residues: MFS siderochrome iron transporter 1 (609 aa).

Composition is skewed to basic and acidic residues over residues 1-17 and 25-34; these read MSALTKIREGLAREDNT and PHEKEIHETP. The interval 1 to 69 is disordered; it reads MSALTKIREG…NDSDVPSEDV (69 aa). The next 14 helical transmembrane spans lie at 81 to 101, 125 to 145, 154 to 174, 182 to 202, 220 to 240, 245 to 265, 300 to 320, 329 to 349, 368 to 390, 407 to 427, 432 to 452, 469 to 489, 496 to 516, and 573 to 593; these read LTWGKGSLAALLCLIWTLFLI, LMTTIPIVSDAMTAACYIPMA, AEGFLLMSGFATLGLILMAVS, AAQVFYSVGWGGMIYAVGVLA, SPYMITAFAGSKAAAAFVIDV, WGFGWIALVLPCVTIPLFLVL, VIGIFLFGGGLVVFLLPFNLA, TGYIIAMIIVGFCTLIFFGVW, SVVAACMIDLTYQVSYYTWNYFF, YVNSTFQVVSGVLLFIVGFLI, FYKWTFYFAVPIYIFALGLMI, IFISIGGAVFILVMQLAVLAA, AAALATLYVAGGVGGAVGGAI, and IRMLAAGVGIASLFFIWVPML.

The protein belongs to the major facilitator superfamily.

Its subcellular location is the cell membrane. Its function is as follows. Major facilitator transporter involved in extracellular siderophore uptake. Gibberella zeae produces extracellular coprogen-type siderophores as well as the intracellular siderophore ferricrocin. The role of extracellular siderophores is to supply iron to the fungus during plant infection, and the intracellular ferricrocin is required for intracellular iron distribution and storage with a crucial role in ascus and ascospore development. In Gibberella zeae (strain ATCC MYA-4620 / CBS 123657 / FGSC 9075 / NRRL 31084 / PH-1) (Wheat head blight fungus), this protein is MFS siderochrome iron transporter 1.